A 3179-amino-acid chain; its full sequence is Guanylate cyclase beta (3179 aa).

The Cytoplasmic segment spans residues 1–60 (MKTQTLSLMNINGKRKFLGTNNKIYRKVIINPTSEDDIQKFCRNYFRIYNFSLYNFIRRL). A helical membrane pass occupies residues 61 to 81 (ISFDAILVYSLFLTVYIFSEI). At 82–88 (NHGETKK) the chain is on the extracellular side. The helical transmembrane segment at 89 to 109 (YLFIDTAISLFFNIILLIVIE) threads the bilayer. Residues 110-295 (SLFELKKLKD…FCIKMNNIVY (186 aa)) lie on the Cytoplasmic side of the membrane. Residues 296-316 (YLIFMYFVFVVLSIVIKTIFF) traverse the membrane as a helical segment. Residues 317–328 (HKKNSFQNSRDS) are Extracellular-facing. A helical membrane pass occupies residues 329–349 (FLSMLEDFVGLYILVLPIMMY). The Cytoplasmic portion of the chain corresponds to 350 to 988 (SEKSLIYIIQ…GRLNRFSLCK (639 aa)). A helical transmembrane segment spans residues 989 to 1009 (VFLWIIYLKITVVSFYFFHNF). Residues 1010-1020 (DNYFSGSSASS) lie on the Extracellular side of the membrane. The helical transmembrane segment at 1021-1041 (ILYTQTTFALLHYFLIIAFSA) threads the bilayer. Topologically, residues 1042–1069 (YEIDLPYKFVRRLPYIYQLSRRKYFLNN) are cytoplasmic. The chain crosses the membrane as a helical span at residues 1070–1090 (NIILLTIIEAILISLTSYYIL). At 1091–1102 (RLNVFHLITHRE) the chain is on the extracellular side. The chain crosses the membrane as a helical span at residues 1103 to 1123 (FTFHIFILNVFITTEKILLLS). The Cytoplasmic segment spans residues 1124–1127 (KTWH). A helical transmembrane segment spans residues 1128–1148 (IYFFIMAVLIIGILLIYVNIF). Topologically, residues 1149 to 1168 (TLVDCIKNGKCEFSLFQMEN) are extracellular. Residues 1169 to 1189 (IYFWTSLFPILYINFIFDKLM) traverse the membrane as a helical segment. Residues 1190–1304 (KYIKNRIYPD…YEKGNKLKLR (115 aa)) lie on the Cytoplasmic side of the membrane. Residues 1305–1325 (IIVILLFLIYIIIFSSQTIID) form a helical membrane-spanning segment. Over 1326–1331 (INTKSN) the chain is Extracellular. Residues 1332–1352 (IHYITMFYIIYFVLACVLLIY) traverse the membrane as a helical segment. Topologically, residues 1353–1360 (IRIRNKAT) are cytoplasmic. Residues 1361–1381 (STFFFFLSRFLLICGFCIELY) traverse the membrane as a helical segment. At 1382–1401 (DNISNDILNVLITYSFTVSY) the chain is on the extracellular side. Asn-1383 carries N-linked (GlcNAc...) asparagine glycosylation. A helical membrane pass occupies residues 1402-1422 (IFFMSFKILEALLVCISILLL). The Cytoplasmic segment spans residues 1423-1464 (TFGVYYEKNKNMIDICTHFCSNPYLSINNLDHMNISCLCKKQ). A helical transmembrane segment spans residues 1465–1485 (IVIFLISLLSFTLICLSMKYY). At 1486 to 1507 (EIFYLKKKFLFRYKQKVNLAKQ) the chain is on the extracellular side. A helical membrane pass occupies residues 1508 to 1528 (IEILHTMLPNFLVEYLLISDP). Topologically, residues 1529–2739 (KNDGIMVGKN…IINIDLTKKL (1211 aa)) are cytoplasmic. Residues 1548 to 1700 (SVIFCDIDDF…DTVNTASRMK (153 aa)) enclose the Guanylate cyclase 1 domain. Disordered regions lie at residues 2123-2153 (LHNYNPMKNKNKNKKNNKNVRRNEYPNYTSS), 2355-2379 (SINKQTERKPKKKNKKNIENKKDKK), and 2576-2656 (KDSD…HHHS). Positions 2131–2142 (NKNKNKKNNKNV) are enriched in basic residues. A compositionally biased stretch (low complexity) spans 2584–2607 (NNNKISKNRYNNNNNNNNSNYSNI). Residues 2614–2645 (HNNKKNHHHNNNKYHHHNNNKYHHHNNNKYHH) show a composition bias toward basic residues. The chain crosses the membrane as a helical span at residues 2740-2760 (IIIFIFTEIFLSLCNIIELSF). Over 2761-2770 (YEKKLRYNDS) the chain is Extracellular. An N-linked (GlcNAc...) asparagine glycan is attached at Asn-2768. The helical transmembrane segment at 2771 to 2791 (IVIIWLIRSIYLFIITYIWII) threads the bilayer. Topologically, residues 2792–2809 (LKTKLKEYKNNSSKMMWT) are cytoplasmic. The helical transmembrane segment at 2810-2830 (IFILNIFLCSWGIILIDLSCI) threads the bilayer. The Extracellular segment spans residues 2831–2842 (HYSMLLGNKNER). The chain crosses the membrane as a helical span at residues 2843 to 2863 (ALFFMKDASELIICIQLIFIK). Residues 2864-2870 (NMLFKHK) are Cytoplasmic-facing. The chain crosses the membrane as a helical span at residues 2871–2891 (FFFFVFFYIFLIYSFSKLFSI). The Extracellular portion of the chain corresponds to 2892-2895 (HTCQ). The chain crosses the membrane as a helical span at residues 2896–2916 (THICCSIILFISINILYFWYS). The Cytoplasmic segment spans residues 2917-3179 (EYLDRIQFLV…KLRQKKGLRS (263 aa)). Residues 2968-3102 (AFLFADIVGF…LDVLIANKIE (135 aa)) form the Guanylate cyclase 2 domain. Residues Asp-2973, Ile-2974, and Asp-3017 each contribute to the Mg(2+) site.

This sequence in the N-terminal section; belongs to the cation transport ATPase (P-type) (TC 3.A.3) family. Type IV subfamily. In the C-terminal section; belongs to the adenylyl cyclase class-4/guanylyl cyclase family. Mg(2+) serves as cofactor. It depends on Mn(2+) as a cofactor.

It is found in the membrane. It catalyses the reaction GTP = 3',5'-cyclic GMP + diphosphate. Its activity is regulated as follows. Basal guanylate activity of the recombinant guanylate cyclase domains 1 and 2 is not modulated by an increase in Ca(2+) levels or by the gametogenesis inducer xanthurenic acid. Its function is as follows. Catalyzes the synthesis of the second messenger cGMP from GTP. Regulates cGMP production in gametocytes; however, is dispensable for the initiation of gametogenesis. Does not have adenylate cyclase activity. This Plasmodium falciparum (isolate 3D7) protein is Guanylate cyclase beta.